The primary structure comprises 82 residues: Cytochrome b559 subunit alpha (82 aa).

A helical membrane pass occupies residues V22–F36. Position 24 (H24) interacts with heme.

This sequence belongs to the PsbE/PsbF family. As to quaternary structure, heterodimer of an alpha subunit and a beta subunit. PSII is composed of 1 copy each of membrane proteins PsbA, PsbB, PsbC, PsbD, PsbE, PsbF, PsbH, PsbI, PsbJ, PsbK, PsbL, PsbM, PsbT, PsbX, PsbY, PsbZ, Psb30/Ycf12, peripheral proteins PsbO, CyanoQ (PsbQ), PsbU, PsbV and a large number of cofactors. It forms dimeric complexes. Requires heme b as cofactor.

The protein localises to the cellular thylakoid membrane. In terms of biological role, this b-type cytochrome is tightly associated with the reaction center of photosystem II (PSII). PSII is a light-driven water:plastoquinone oxidoreductase that uses light energy to abstract electrons from H(2)O, generating O(2) and a proton gradient subsequently used for ATP formation. It consists of a core antenna complex that captures photons, and an electron transfer chain that converts photonic excitation into a charge separation. This chain is Cytochrome b559 subunit alpha, found in Synechococcus sp. (strain CC9605).